The primary structure comprises 537 residues: Putative cysteine ligase BshC (537 aa).

Residues 422–450 (IEKVEGMIEQQRRLYQDLLDEVAGNQNNI) adopt a coiled-coil conformation.

This sequence belongs to the BshC family.

Involved in bacillithiol (BSH) biosynthesis. May catalyze the last step of the pathway, the addition of cysteine to glucosamine malate (GlcN-Mal) to generate BSH. The protein is Putative cysteine ligase BshC of Staphylococcus aureus (strain MRSA252).